A 559-amino-acid chain; its full sequence is 3-phosphoinositide-dependent protein kinase 1 (559 aa).

Position 9 is a phosphotyrosine; by SRC and INSR (Tyr-9). A Phosphoserine modification is found at Ser-25. Positions 25 to 83 (SPSMVRSQTEPSSSPGIPSGVSRQGSTMDGTTAEARPSTNPLQQHPAQLPPQPRKKRPE) are disordered. The span at 35 to 46 (PSSSPGIPSGVS) shows a compositional bias: low complexity. Residues 85–345 (FKFGKILGEG…YGPLKAHPFF (261 aa)) enclose the Protein kinase domain. Residues 95–97 (SFS) and Lys-114 each bind ATP. The segment at 116–160 (LEKRHIIKENKVPYVTRERDVMSRLDHPFFVKLYFTFQDDEKLYF) is PIF-pocket. ATP is bound by residues 163 to 165 (SYA) and Glu-169. Asp-208 acts as the Proton acceptor in catalysis. ATP contacts are provided by Glu-212 and Asp-226. Ser-244 carries the phosphoserine modification. At Lys-307 the chain carries N6-acetyllysine. A Phosphothreonine; by MELK modification is found at Thr-357. Phosphotyrosine; by SRC and INSR is present on residues Tyr-376 and Tyr-379. Ser-396 is subject to Phosphoserine. Residue Ser-397 is modified to Phosphoserine; by MAP3K5. Position 399 is a phosphoserine (Ser-399). A Phosphoserine; by MAP3K5 modification is found at Ser-401. At Ser-413 the chain carries Phosphoserine. A PH domain is found at 462–553 (KMGPVDKRKG…EVWRQQYQSS (92 aa)). Position 504 is a phosphoserine; by PKC/PRKCQ (Ser-504). Thr-516 is modified (phosphothreonine; by autocatalysis). Ser-532 is subject to Phosphoserine; by PKC/PRKCQ.

Belongs to the protein kinase superfamily. AGC Ser/Thr protein kinase family. PDPK1 subfamily. As to quaternary structure, homodimer in its autoinhibited state. Active as monomer. Interacts with NPRL2, PPARG, PAK1, PTK2B, GRB14, PKN1 (via C-terminus), STRAP and IKKB. The Tyr-9 phosphorylated form interacts with SRC, RASA1 and CRK (via their SH2 domains). Interacts with SGK3 in a phosphorylation-dependent manner. The tyrosine-phosphorylated form interacts with PTPN6. The Ser-244 phosphorylated form interacts with YWHAH and YWHAQ. Binds INSR in response to insulin. Interacts (via PH domain) with SMAD3, SMAD4 and SMAD7. Interacts with PKN2; the interaction stimulates PDPK1 autophosphorylation, its PI(3,4,5)P3-dependent kinase activity toward 'Ser-473' of AKT1 but also activates its kinase activity toward PRKCD and PRKCZ. Post-translationally, phosphorylation on Ser-244 in the activation loop is required for full activity. PDPK1 itself can autophosphorylate Ser-244, leading to its own activation. Autophosphorylation is inhibited by the apoptotic C-terminus cleavage product of PKN2. Tyr-9 phosphorylation is critical for stabilization of both PDPK1 and the PDPK1/SRC complex via HSP90-mediated protection of PDPK1 degradation. Angiotensin II stimulates the tyrosine phosphorylation of PDPK1 in vascular smooth muscle in a calcium- and SRC-dependent manner. Phosphorylated on Tyr-9, Tyr-376 and Tyr-379 by INSR in response to insulin. Palmitate negatively regulates autophosphorylation at Ser-244 and palmitate-induced phosphorylation at Ser-532 and Ser-504 by PKC/PRKCQ negatively regulates its ability to phosphorylate PKB/AKT1. Phosphorylation at Thr-357 by MELK partially inhibits kinase activity, the inhibition is cooperatively enhanced by phosphorylation at Ser-397 and Ser-401 by MAP3K5. Monoubiquitinated in the kinase domain, deubiquitinated by USP4.

It localises to the cytoplasm. Its subcellular location is the nucleus. It is found in the cell membrane. The protein localises to the cell junction. The protein resides in the focal adhesion. It catalyses the reaction L-seryl-[protein] + ATP = O-phospho-L-seryl-[protein] + ADP + H(+). It carries out the reaction L-threonyl-[protein] + ATP = O-phospho-L-threonyl-[protein] + ADP + H(+). Its activity is regulated as follows. Homodimerization regulates its activity by maintaining the kinase in an autoinhibitory conformation. NPRL2 down-regulates its activity by interfering with tyrosine phosphorylation at the Tyr-9, Tyr-376 and Tyr-379 residues. The 14-3-3 protein YWHAQ acts as a negative regulator by association with the residues surrounding the Ser-244 residue. STRAP positively regulates its activity by enhancing its autophosphorylation and by stimulating its dissociation from YWHAQ. SMAD2, SMAD3, SMAD4 and SMAD7 also positively regulate its activity by stimulating its dissociation from YWHAQ. Activated by phosphorylation on Tyr-9, Tyr-376 and Tyr-379 by INSR in response to insulin. Serine/threonine kinase which acts as a master kinase, phosphorylating and activating a subgroup of the AGC family of protein kinases. Its targets include: protein kinase B (PKB/AKT1, PKB/AKT2, PKB/AKT3), p70 ribosomal protein S6 kinase (RPS6KB1), p90 ribosomal protein S6 kinase (RPS6KA1, RPS6KA2 and RPS6KA3), cyclic AMP-dependent protein kinase (PRKACA), protein kinase C (PRKCD and PRKCZ), serum and glucocorticoid-inducible kinase (SGK1, SGK2 and SGK3), p21-activated kinase-1 (PAK1), TSSK3, protein kinase PKN (PKN1 and PKN2). Plays a central role in the transduction of signals from insulin by providing the activating phosphorylation to PKB/AKT1, thus propagating the signal to downstream targets controlling cell proliferation and survival, as well as glucose and amino acid uptake and storage. Negatively regulates the TGF-beta-induced signaling by: modulating the association of SMAD3 and SMAD7 with TGF-beta receptor, phosphorylating SMAD2, SMAD3, SMAD4 and SMAD7, preventing the nuclear translocation of SMAD3 and SMAD4 and the translocation of SMAD7 from the nucleus to the cytoplasm in response to TGF-beta. Activates PPARG transcriptional activity and promotes adipocyte differentiation. Activates the NF-kappa-B pathway via phosphorylation of IKKB. The tyrosine phosphorylated form is crucial for the regulation of focal adhesions by angiotensin II. Controls proliferation, survival, and growth of developing pancreatic cells. Participates in the regulation of Ca(2+) entry and Ca(2+)-activated K(+) channels of mast cells. Essential for the motility of vascular endothelial cells (ECs) and is involved in the regulation of their chemotaxis. Plays a critical role in cardiac homeostasis by serving as a dual effector for cell survival and beta-adrenergic response. Plays an important role during thymocyte development by regulating the expression of key nutrient receptors on the surface of pre-T cells and mediating Notch-induced cell growth and proliferative responses. Provides negative feedback inhibition to toll-like receptor-mediated NF-kappa-B activation in macrophages. The chain is 3-phosphoinositide-dependent protein kinase 1 (Pdpk1) from Rattus norvegicus (Rat).